Consider the following 149-residue polypeptide: D-aminoacyl-tRNA deacylase (149 aa).

The Gly-cisPro motif, important for rejection of L-amino acids signature appears at 137–138 (GP).

The protein belongs to the DTD family. In terms of assembly, homodimer.

The protein resides in the cytoplasm. It carries out the reaction glycyl-tRNA(Ala) + H2O = tRNA(Ala) + glycine + H(+). The catalysed reaction is a D-aminoacyl-tRNA + H2O = a tRNA + a D-alpha-amino acid + H(+). An aminoacyl-tRNA editing enzyme that deacylates mischarged D-aminoacyl-tRNAs. Also deacylates mischarged glycyl-tRNA(Ala), protecting cells against glycine mischarging by AlaRS. Acts via tRNA-based rather than protein-based catalysis; rejects L-amino acids rather than detecting D-amino acids in the active site. By recycling D-aminoacyl-tRNA to D-amino acids and free tRNA molecules, this enzyme counteracts the toxicity associated with the formation of D-aminoacyl-tRNA entities in vivo and helps enforce protein L-homochirality. This chain is D-aminoacyl-tRNA deacylase, found in Thermotoga petrophila (strain ATCC BAA-488 / DSM 13995 / JCM 10881 / RKU-1).